A 760-amino-acid polypeptide reads, in one-letter code: Xaa-Pro dipeptidyl-peptidase (760 aa).

Catalysis depends on charge relay system residues Ser-349, Asp-469, and His-499.

Belongs to the peptidase S15 family. As to quaternary structure, homodimer.

It is found in the cytoplasm. It carries out the reaction Hydrolyzes Xaa-Pro-|- bonds to release unblocked, N-terminal dipeptides from substrates including Ala-Pro-|-p-nitroanilide and (sequentially) Tyr-Pro-|-Phe-Pro-|-Gly-Pro-|-Ile.. Its function is as follows. Removes N-terminal dipeptides sequentially from polypeptides having unsubstituted N-termini provided that the penultimate residue is proline. This chain is Xaa-Pro dipeptidyl-peptidase, found in Streptococcus pyogenes serotype M49 (strain NZ131).